The sequence spans 394 residues: MEAEEPPEARRCCPEALGKARGCCPEALGKLLPGLCFLCCLVTYALVGAALFSAVEGRPDPEAEENPELKKFLDDLCNILKCNLTVVEGSRKNLCEHLQHLKPQWLKAPQDWSFLSALFFCCTVFSTVGYGHMYPVTRLGKFLCMLYALFGIPLMFLVLTDIGDILATILSRAYSRFQALLCLPHDIFKWRSLPLCRKQPDSKPVEEAIPQIVIDAGVDELLNPQPSKDPPSPSCNVELFERLVAREKKNKLQPPTRPVERSNSCPELVLGRLSCSILSNLDEVGQQVERLDIPLPVIALVVFAYISCAAAILPFWETELGFEDAFYFCFVTLTTIGFGDIVLVHPHFFLFFSIYIIVGMEILFIAFKLMQNRLLHTYKTLMLFVCQREVSLPW.

Residues 1-31 lie on the Cytoplasmic side of the membrane; sequence MEAEEPPEARRCCPEALGKARGCCPEALGKL. A helical transmembrane segment spans residues 32–52; it reads LPGLCFLCCLVTYALVGAALF. N83 carries N-linked (GlcNAc...) asparagine glycosylation. The pore-forming intramembrane region spans 114–140; the sequence is FLSALFFCCTVFSTVGYGHMYPVTRLG. Positions 127, 128, 129, and 130 each coordinate K(+). Residues 127–132 are selectivity filter 1; that stretch reads TVGYGH. Residues 142-162 traverse the membrane as a helical segment; sequence FLCMLYALFGIPLMFLVLTDI. Over 163–292 the chain is Cytoplasmic; it reads GDILATILSR…EVGQQVERLD (130 aa). The interaction with calcineurin stretch occupies residues 210 to 215; that stretch reads PQIVID. The tract at residues 261–266 is interaction with YWHAH; that stretch reads RSNSCP. A phosphoserine mark is found at S264 and S276. Residues 293 to 313 form a helical membrane-spanning segment; that stretch reads IPLPVIALVVFAYISCAAAIL. Residues 326-340 constitute an intramembrane region (pore-forming); the sequence is FYFCFVTLTTIGFGD. A selectivity filter 2 region spans residues 335–340; that stretch reads TIGFGD. A helical membrane pass occupies residues 347–367; sequence HFFLFFSIYIIVGMEILFIAF. The Cytoplasmic portion of the chain corresponds to 368–394; the sequence is KLMQNRLLHTYKTLMLFVCQREVSLPW.

This sequence belongs to the two pore domain potassium channel (TC 1.A.1.8) family. Homodimer. Heterodimer with KCNK2. Heterodimer with KCNK10. Interacts with calcineurin. Interacts with YWHAH, in a phosphorylation-dependent manner. In terms of processing, phosphorylation of Ser-264 is required for the binding of 14-3-3eta/YWHAH. Calcineurin-mediated dephosphorylation of Ser-276 enhances channel activity. Post-translationally, N-glycosylated. In terms of tissue distribution, detected in brain cortex, cerebellum, dorsal root ganglion, spinal cord and testis. High expression in trigeminal ganglion (at protein level), also expressed in autonomic nervous system ganglia such as the stellate ganglion and paravertebral sympathetic ganglia. Expressed in all adult spinal cord and brain regions, with slightly higher expression in thalamus, hypothalamus, hippocampus and posterior corte (at protein level). In non-neuronal tissues, substantial expression found in lung and heart and weal expression in liver, testis, kidney, small intestine and spleen. Expressed in regulatory T cells (at protein level).

It localises to the cell membrane. The catalysed reaction is K(+)(in) = K(+)(out). Its activity is regulated as follows. Activated upon cell stimulation via Ca(2+)-mobilizing receptors, such as CHRM1/M1 muscarinic receptor and AGTR1/AT1a angiotensin receptor. Activated by volatile anesthetics, such as isoflurane and inhibited by local anesthetics such as bupivacaine and lidocaine. Inhibited by extracellular acidic pH. Inhibited by Zn(2+) ions. Inhibited by hydroxy-alpha-sanshool, an ingredient of Schezuan pepper. Inhibited by Ba(2+) ions. Functionally, k(+) channel that conducts outward and inward rectifying currents at depolarized and hyperpolarized membrane potentials, respectively. The outward rectifying currents are voltage-dependent, coupled to K(+) electrochemical gradient across the membrane, whereas the inward currents can be induced in response to activation of Ca(2+)-mobilizing receptors. Homo- and heterodimerizes to form functional channels with distinct regulatory and gating properties. In trigeminal ganglia sensory neurons, the heterodimers of KCNK18/TRESK and KCNK2/TREK-1 or KCNK10/TREK-2 inhibit neuronal firing and neurogenic inflammation by stabilizing the resting membrane potential at K(+) equilibrium potential as well as by regulating the threshold of action potentials and the spike frequency. In thymocytes, conducts K(+) currents upon T cell receptor (TCR) signaling leading to sustained Ca(2+) influx and NF-kappa-B activation, FOXP3 transcription and positive selection of regulatory T cell (Treg) progenitor subsets. Appears to mediate the analgesics effects of hydroxy-alpha-sanshool, a metabolite naturally present in Schezuan pepper and other Xanthoxylum plants. The chain is Potassium channel subfamily K member 18 from Mus musculus (Mouse).